A 396-amino-acid polypeptide reads, in one-letter code: Elongation factor Tu (396 aa).

Residues 10–206 form the tr-type G domain; it reads KPHVNIGTIG…AVDEYIPTPQ (197 aa). The tract at residues 19–26 is G1; it reads GHVDHGKT. Position 19-26 (19-26) interacts with GTP; the sequence is GHVDHGKT. A Mg(2+)-binding site is contributed by Thr-26. Residues 60 to 64 are G2; the sequence is GITIS. The G3 stretch occupies residues 81 to 84; that stretch reads DCPG. GTP contacts are provided by residues 81-85 and 136-139; these read DCPGH and NKVD. Positions 136–139 are G4; the sequence is NKVD. Residues 174–176 are G5; it reads SAL.

The protein belongs to the TRAFAC class translation factor GTPase superfamily. Classic translation factor GTPase family. EF-Tu/EF-1A subfamily. In terms of assembly, monomer.

It is found in the cytoplasm. It carries out the reaction GTP + H2O = GDP + phosphate + H(+). GTP hydrolase that promotes the GTP-dependent binding of aminoacyl-tRNA to the A-site of ribosomes during protein biosynthesis. This chain is Elongation factor Tu, found in Stigmatella aurantiaca.